The chain runs to 562 residues: Pentatricopeptide repeat-containing protein At3g22670, mitochondrial (562 aa).

The transit peptide at M1–A31 directs the protein to the mitochondrion. 10 PPR repeats span residues S165–K199, T202–S232, D238–T268, D272–P306, D307–P341, N342–P376, D377–R411, D412–S446, N450–I484, and D485–P519.

This sequence belongs to the PPR family. P subfamily.

The protein resides in the mitochondrion. The sequence is that of Pentatricopeptide repeat-containing protein At3g22670, mitochondrial from Arabidopsis thaliana (Mouse-ear cress).